The primary structure comprises 510 residues: UDP-N-acetylmuramyl-tripeptide synthetase (510 aa).

Ser-36 serves as a coordination point for UDP-N-acetyl-alpha-D-muramoyl-L-alanyl-D-glutamate. 113 to 119 (GTKGKTT) contributes to the ATP binding site. UDP-N-acetyl-alpha-D-muramoyl-L-alanyl-D-glutamate-binding positions include 159 to 160 (TT), Ser-186, and Arg-194. At Lys-228 the chain carries N6-carboxylysine.

This sequence belongs to the MurCDEF family. MurE subfamily. Carboxylation is probably crucial for Mg(2+) binding and, consequently, for the gamma-phosphate positioning of ATP.

Its subcellular location is the cytoplasm. Its pathway is cell wall biogenesis; peptidoglycan biosynthesis. In terms of biological role, catalyzes the addition of an amino acid to the nucleotide precursor UDP-N-acetylmuramoyl-L-alanyl-D-glutamate (UMAG) in the biosynthesis of bacterial cell-wall peptidoglycan. The polypeptide is UDP-N-acetylmuramyl-tripeptide synthetase (Ligilactobacillus salivarius (strain UCC118) (Lactobacillus salivarius)).